The following is an 89-amino-acid chain: Small ribosomal subunit protein uS15 (89 aa).

Belongs to the universal ribosomal protein uS15 family. As to quaternary structure, part of the 30S ribosomal subunit. Forms a bridge to the 50S subunit in the 70S ribosome, contacting the 23S rRNA.

Its function is as follows. One of the primary rRNA binding proteins, it binds directly to 16S rRNA where it helps nucleate assembly of the platform of the 30S subunit by binding and bridging several RNA helices of the 16S rRNA. Forms an intersubunit bridge (bridge B4) with the 23S rRNA of the 50S subunit in the ribosome. The sequence is that of Small ribosomal subunit protein uS15 from Psychromonas ingrahamii (strain DSM 17664 / CCUG 51855 / 37).